Reading from the N-terminus, the 248-residue chain is Flagellar L-ring protein (248 aa).

The first 23 residues, 1–23 (MRHAFRHSVRTLGLLGLLPVLSA), serve as a signal peptide directing secretion. C24 carries the N-palmitoyl cysteine lipid modification. The S-diacylglycerol cysteine moiety is linked to residue C24.

This sequence belongs to the FlgH family. The basal body constitutes a major portion of the flagellar organelle and consists of four rings (L,P,S, and M) mounted on a central rod.

It localises to the cell outer membrane. It is found in the bacterial flagellum basal body. Functionally, assembles around the rod to form the L-ring and probably protects the motor/basal body from shearing forces during rotation. The polypeptide is Flagellar L-ring protein (Gluconobacter oxydans (strain 621H) (Gluconobacter suboxydans)).